The sequence spans 304 residues: MNIVVLFGGTSPEREISLKSGENIAATLRARGHQVETLDTAVPNFVEQLMQLKPDCVFPALHGADGEDGKIQGLLSILHIPYVGSDVRASVITMDKYLTKLVALQSGIPTPSFIYVYDPHLVPDYWDVERKLGSPFIVKPCDVGSTIGLSLVRSASEYEVALEEAFRFSDRLLLEEFIDGFEVTVGLFRLGGDFLVLPPIYVVKPDRIFDYDTKYKPGGAKHVYDLPISVEARERLTSYSKRICKIVGIGGVARLDYIVKDETPYLLEINSIPGMTAESLVPDEVRHAGRDFGEFLEDLIKDAL.

In terms of domain architecture, ATP-grasp spans 100-301 (KLVALQSGIP…FGEFLEDLIK (202 aa)). 129–184 (ERKLGSPFIVKPCDVGSTIGLSLVRSASEYEVALEEAFRFSDRLLLEEFIDGFEVT) is a binding site for ATP. Mg(2+) contacts are provided by aspartate 256, glutamate 268, and asparagine 270.

It belongs to the D-alanine--D-alanine ligase family. Requires Mg(2+) as cofactor. The cofactor is Mn(2+).

Its subcellular location is the cytoplasm. The enzyme catalyses 2 D-alanine + ATP = D-alanyl-D-alanine + ADP + phosphate + H(+). The protein operates within cell wall biogenesis; peptidoglycan biosynthesis. Its function is as follows. Cell wall formation. In Coprothermobacter proteolyticus (strain ATCC 35245 / DSM 5265 / OCM 4 / BT), this protein is D-alanine--D-alanine ligase.